We begin with the raw amino-acid sequence, 65 residues long: MSNQNIPQLSEYQTSVSQVAVTPPPKPKTPQIFEYQTSDSIVNNPRPFYNSDLEFDDIDMYLLPN.

A compositionally biased stretch (polar residues) spans 1-20 (MSNQNIPQLSEYQTSVSQVA). The segment at 1 to 32 (MSNQNIPQLSEYQTSVSQVAVTPPPKPKTPQI) is disordered.

This Bos taurus (Bovine) protein is 7 kDa A-type inclusion protein.